Consider the following 570-residue polypeptide: MKMSNMLISTLREVPAEAEIDSHKLMLRSGMIRKMASGIYNYMPLGLKALKKVEDIIREEMNEAGAQEFLASAMIPAELWQSSGRWDAYGAEMFRVKDRNERDFCLGPTHEEVFTDIAKNEIKSYKQLPVNLYQIQTKYRDERRPRFGVMRSREFVMKDAYSFDKDQQGLDLSYNKMYEAYVKIFNRCGLDAKCVEADSGAIGGSNSAEFMVKSEVGEDDIVFCTECNYAANIEKATARLEEAEKEELIEVEKVSTPDSRGIDEVSEFLNISSKKTVKTLLYNVDGKIVAVFVRGDREVNEVKVANASNASGDIEMASHEEYMNATGCGIGFAGPIGIKADLILVDKEVKNMCNFVTGANETGYHIKNVNYGRDFEGTIGDYRNVVEGEACPTCGGKLTISRGTEVGHIFKLGTKYSEAMDAKFIAENGKEAPFIMGCYGIGVTRTMASIIEQHNDENGIVWPLAVAPYHVSVIAVNVKDEEQVKIATKLYEDLKSMGVEALLDDRNERAGVKFKDSEIMGIPMRITVGKKIVDGEVEFKLRIGDMEVVKIEDVCQMVKGEFDKNNLKLR.

This sequence belongs to the class-II aminoacyl-tRNA synthetase family. ProS type 1 subfamily. In terms of assembly, homodimer.

It is found in the cytoplasm. The enzyme catalyses tRNA(Pro) + L-proline + ATP = L-prolyl-tRNA(Pro) + AMP + diphosphate. Its function is as follows. Catalyzes the attachment of proline to tRNA(Pro) in a two-step reaction: proline is first activated by ATP to form Pro-AMP and then transferred to the acceptor end of tRNA(Pro). As ProRS can inadvertently accommodate and process non-cognate amino acids such as alanine and cysteine, to avoid such errors it has two additional distinct editing activities against alanine. One activity is designated as 'pretransfer' editing and involves the tRNA(Pro)-independent hydrolysis of activated Ala-AMP. The other activity is designated 'posttransfer' editing and involves deacylation of mischarged Ala-tRNA(Pro). The misacylated Cys-tRNA(Pro) is not edited by ProRS. This is Proline--tRNA ligase from Clostridium botulinum (strain Eklund 17B / Type B).